The sequence spans 230 residues: RNA chaperone ProQ (230 aa).

Positions 104 to 176 (AEAKARVQAQ…APRQNTEKLT (73 aa)) are disordered. The span at 115-132 (AEQRAKKREAEGDKETSK) shows a compositional bias: basic and acidic residues.

It belongs to the ProQ family.

It is found in the cytoplasm. In terms of biological role, RNA chaperone with significant RNA binding, RNA strand exchange and RNA duplexing activities. May regulate ProP activity through an RNA-based, post-transcriptional mechanism. In Proteus mirabilis (strain HI4320), this protein is RNA chaperone ProQ.